A 434-amino-acid polypeptide reads, in one-letter code: F-box/FBD/LRR-repeat protein At3g26920 (434 aa).

In terms of domain architecture, F-box spans 16–65 (EDRISQLPEALLLQILSLLPTKEVVAVSVLAKRWRFLWKMVPSLEFFYYF). 7 LRR repeats span residues 69–95 (LERFSYNVSKCLFSHQAPFLQSLHLNM), 100–125 (DPRIMDFEILIGIAFGRQLRKLVLKV), 145–172 (TLELYHCILIDVPFPVCLKSLRTLNLHE), 173–198 (VEFVNDESVVNLLAGCISLENLVIHQ), 219–244 (VIVEYYEEFSVFVVNTPSLKYLKIEG), 265–290 (IIDVSFKVFESILGSLASVQRLSLKV), and 315–341 (TYKPKWWNLLTLMLDTSPNLQVLKIFD). Residues 353–403 (KWNEPKNVPECLLLHLETFVWTCYEGKLENEIELAKYILRNARRLKKATFS) enclose the FBD domain.

This Arabidopsis thaliana (Mouse-ear cress) protein is F-box/FBD/LRR-repeat protein At3g26920.